The following is a 471-amino-acid chain: Cytochrome P450 monooxygenase afvE (471 aa).

The chain crosses the membrane as a helical span at residues 265-285; the sequence is IIFYHFELSTPVAFFIIFAVY. Cys410 lines the heme pocket.

The protein belongs to the cytochrome P450 family. The cofactor is heme.

The protein localises to the membrane. It participates in secondary metabolite biosynthesis. Cytochrome P450 monooxygenase; part of the gene cluster that mediates the biosynthesis of aflavarin, a bicoumarin that exhibits anti-insectan activity against the fungivorous beetle C.hemipterus. This chain is Cytochrome P450 monooxygenase afvE, found in Aspergillus flavus (strain ATCC 200026 / FGSC A1120 / IAM 13836 / NRRL 3357 / JCM 12722 / SRRC 167).